Here is a 282-residue protein sequence, read N- to C-terminus: RsbT co-antagonist protein RsbRC (282 aa).

Residues Ser165 and Ser174 each carry the phosphoserine modification. In terms of domain architecture, STAS spans 165 to 276; it reads SAPVIVLFHS…STLASAIASD (112 aa). Phosphothreonine is present on Thr186.

In terms of assembly, probably present in the stressosome with RsbRA, RsbRB, RsbRD and RsbS. Post-translationally, phosphorylated by RsbT.

In terms of biological role, one of 4 functionally non-identical RsbR paralogs, it functions in the environmental signaling branch of the general stress response. Functionally, negative regulator of sigma-B activity. Non-phosphorylated RsbS binds to RsbT, preventing its association with RsbU. Requires any one of RsbRA, RsbRB, RsbRC or RsbRD to sequester RsbT. When RsbS and the RsbR paralog(s) are phosphorylated, they release RsbT, which can then bind and activate RsbU. The protein is RsbT co-antagonist protein RsbRC (rsbRC) of Bacillus subtilis (strain 168).